Here is a 1922-residue protein sequence, read N- to C-terminus: Kinesin-related protein 4 (1922 aa).

Positions 22–343 constitute a Kinesin motor domain; it reads KIKVAIRVRP…LQFAKRAKRV (322 aa). 101–108 is an ATP binding site; sequence GQTSSGKT. The disordered stretch occupies residues 448 to 538; it reads QKIKKIKNSE…DDEFKDNLNL (91 aa). Positions 456–468 are enriched in low complexity; sequence SENNISSSSSNSS. 2 stretches are compositionally biased toward acidic residues: residues 469–480 and 488–532; these read GEEDDDDKDDEN and DKDD…DDEF. Residues 562–1712 are a coiled coil; sequence QVKVKREDLD…ELESTKQKNL (1151 aa). The disordered stretch occupies residues 1887–1922; the sequence is TSTDNLTTTSTSLKSKSSSNGENKENQNNNIIIKNN.

This sequence belongs to the TRAFAC class myosin-kinesin ATPase superfamily. Kinesin family.

The protein resides in the cytoplasm. It localises to the cytoskeleton. Its function is as follows. Microtubule-associated force-producing protein that plays a role in organelle transport. Its motor activity is directed toward the microtubule's plus end. Cooperates with dynein in organizing spindle assembly during cell division. This is Kinesin-related protein 4 (kif4) from Dictyostelium discoideum (Social amoeba).